A 157-amino-acid polypeptide reads, in one-letter code: Succinate dehydrogenase assembly factor 2-A, mitochondrial (157 aa).

The N-terminal 21 residues, 1 to 21 (MLRQVLSSTSVRRLLVSPTRC), are a transit peptide targeting the mitochondrion.

Belongs to the SDHAF2 family. As to quaternary structure, interacts with the flavoprotein subunit within the SDH catalytic dimer.

Its subcellular location is the mitochondrion matrix. In terms of biological role, plays an essential role in the assembly of succinate dehydrogenase (SDH), an enzyme complex (also referred to as respiratory complex II) that is a component of both the tricarboxylic acid (TCA) cycle and the mitochondrial electron transport chain, and which couples the oxidation of succinate to fumarate with the reduction of ubiquinone (coenzyme Q) to ubiquinol. Required for flavinylation (covalent attachment of FAD) of the flavoprotein subunit of the SDH catalytic dimer. The sequence is that of Succinate dehydrogenase assembly factor 2-A, mitochondrial from Drosophila mojavensis (Fruit fly).